The following is a 109-amino-acid chain: Protein reprimo (109 aa).

2 N-linked (GlcNAc...) asparagine glycosylation sites follow: asparagine 7 and asparagine 18. Residues valine 56–leucine 76 form a helical membrane-spanning segment. At serine 98 the chain carries Phosphoserine.

Belongs to the reprimo family.

It is found in the cytoplasm. The protein resides in the membrane. Its function is as follows. May be involved in the regulation of p53-dependent G2 arrest of the cell cycle. Seems to induce cell cycle arrest by inhibiting CDK1 activity and nuclear translocation of the CDC2 cyclin B1 complex. This Mus musculus (Mouse) protein is Protein reprimo (Rprm).